Here is a 316-residue protein sequence, read N- to C-terminus: Beta-lactamase 3 (316 aa).

The first 29 residues, 1-29 (MFVLNKFFTNSHYKKIVPVVLLSCATLIG), serve as a signal peptide directing secretion. C30 carries N-palmitoyl cysteine lipidation. Residue C30 is the site of S-diacylglycerol cysteine attachment. Residues 34-53 (NTQSESNKQTNQTNQVKQEN) form a disordered region. Residues 40-50 (NKQTNQTNQVK) show a composition bias toward low complexity. The active-site Acyl-ester intermediate is S95. E191 serves as the catalytic Proton acceptor. 257 to 259 (KTG) is a binding site for substrate.

Belongs to the class-A beta-lactamase family.

It localises to the cell membrane. The catalysed reaction is a beta-lactam + H2O = a substituted beta-amino acid. The sequence is that of Beta-lactamase 3 (blaZ) from Bacillus cereus.